A 314-amino-acid polypeptide reads, in one-letter code: NADH-ubiquinone oxidoreductase chain 1 (314 aa).

A run of 8 helical transmembrane segments spans residues 5 to 25, 78 to 98, 105 to 125, 152 to 172, 176 to 196, 227 to 247, 251 to 271, and 294 to 314; these read IMPL…VAFL, FSPV…PYLI, LGVL…MIAG, ALIL…SFYF, YVWF…SCLA, LIFL…VVIF, DIYS…FIWV, and LSLN…SLLF.

Belongs to the complex I subunit 1 family.

The protein localises to the mitochondrion inner membrane. It carries out the reaction a ubiquinone + NADH + 5 H(+)(in) = a ubiquinol + NAD(+) + 4 H(+)(out). Its function is as follows. Core subunit of the mitochondrial membrane respiratory chain NADH dehydrogenase (Complex I) that is believed to belong to the minimal assembly required for catalysis. Complex I functions in the transfer of electrons from NADH to the respiratory chain. The immediate electron acceptor for the enzyme is believed to be ubiquinone. The chain is NADH-ubiquinone oxidoreductase chain 1 (mt:ND1) from Anopheles gambiae (African malaria mosquito).